Here is a 623-residue protein sequence, read N- to C-terminus: Leucine-rich repeat, immunoglobulin-like domain and transmembrane domain-containing protein 1 (623 aa).

The signal sequence occupies residues 1-21; sequence MRVALGMLWLLALAWPPQARG. Residues 22 to 59 enclose the LRRNT domain; the sequence is FCPSQCSCSLHIMGDGSKARTVVCNDPDMTLPPASIPP. Residues 22–526 are Lumenal-facing; the sequence is FCPSQCSCSL…EVVDAENTQQ (505 aa). 5 LRR repeats span residues 60–81, 84–105, 108–129, 132–153, and 156–177; these read DTSRLRLERTAIRRVPGEAFRP, RLEQLWLPYNALSELNALMLRG, RLRELRLPGNRLAAFPWAALRD, KLRLLDLQANRLSAVPAEAARF, and NLTFLDLSSNQLMRLPQELIVS. N-linked (GlcNAc...) asparagine glycosylation occurs at N156. In terms of domain architecture, LRRCT spans 201–253; that stretch reads NPWACDCRLYDLVHLLDGWAPNLAFIETELRCASPRSLAGVAFSQLELRKCQG. The 70-residue stretch at 266–335 folds into the Ig-like C2-type domain; that stretch reads LLGGTALLRC…YICQAKNFLG (70 aa). C275 and C328 form a disulfide bridge. 2 N-linked (GlcNAc...) asparagine glycosylation sites follow: N296 and N455. A Fibronectin type-III domain is found at 430–518; that stretch reads MVRSVKVVGD…QCVIFSTNEV (89 aa). The helical transmembrane segment at 527–547 threads the bilayer; sequence LINVVVISVAIVIALPLTLLV. Over 548-623 the chain is Cytoplasmic; the sequence is CCSALQKRCR…GGRRINEYFC (76 aa). The stretch at 571–594 is one LRR 6 repeat; that stretch reads YVNLERLGYSEDGLEELSRHSVSE.

May form a homodimer. Interacts with LRIT2; may form a heterodimer with LRIT2. Interacts (via its N-terminal extracellular domain) with metabotropic glutamate receptor GRM6. Interacts (via its extreme C-terminus) with the scaffold protein FRMPD2 (via the third PDZ domain); the interaction leads to their colocalization in photoreceptor synapses.

The protein resides in the endoplasmic reticulum membrane. The protein localises to the cell projection. Its subcellular location is the dendrite. Photoreceptor synaptic protein essential for normal vision. Involved in synapse formation in cone photoreceptor cells. This chain is Leucine-rich repeat, immunoglobulin-like domain and transmembrane domain-containing protein 1 (LRIT1), found in Homo sapiens (Human).